Reading from the N-terminus, the 262-residue chain is Serine/arginine-rich SC35-like splicing factor SCL30A (262 aa).

2 disordered regions span residues 1–38 (MRGR…LPTS) and 115–262 (ENRK…SPSQ). Ser-9 and Ser-20 each carry phosphoserine. Residues 37–115 (TSLLVRNLRH…RELTVVFAEE (79 aa)) form the RRM domain. Over residues 115 to 140 (ENRKKPTEMRTRDRGGRSNRFQDRRR) the composition is skewed to basic and acidic residues. A compositionally biased stretch (basic residues) spans 150-161 (PPRRGRRSRSRS). A phosphoserine mark is found at Ser-166, Ser-174, Ser-176, and Ser-178. A compositionally biased stretch (basic and acidic residues) spans 180-190 (QDRRYEKERSY). 2 positions are modified to phosphoserine: Ser-191 and Ser-193. Residues 209–226 (VKSHSRSPRRSVSPRKNR) are compositionally biased toward basic residues. Low complexity predominate over residues 234–246 (RSQSPVPRQSRSP). Residues Ser-235, Ser-259, and Ser-261 each carry the phosphoserine modification.

The protein belongs to the splicing factor SR family. SCL subfamily. In terms of assembly, component of the spliceosome. Interacts with SNRNP35, CYP59 and RS2Z33.

Its subcellular location is the nucleus speckle. In terms of biological role, involved in intron recognition and spliceosome assembly. Binds probably to multiple 5'-GAAG-3' repeats found in its third intron, suggesting autoregulation of alternative splicing. May be necessary for accurate splicing of the 3' region of introns. This is Serine/arginine-rich SC35-like splicing factor SCL30A (SCL30A) from Arabidopsis thaliana (Mouse-ear cress).